The chain runs to 502 residues: Glycerol kinase (502 aa).

T14 provides a ligand contact to ADP. T14, T15, and S16 together coordinate ATP. Residue T14 participates in sn-glycerol 3-phosphate binding. R18 is an ADP binding site. 3 residues coordinate sn-glycerol 3-phosphate: R84, E85, and Y136. The glycerol site is built by R84, E85, and Y136. H232 bears the Phosphohistidine; by HPr mark. D246 provides a ligand contact to sn-glycerol 3-phosphate. 2 residues coordinate glycerol: D246 and Q247. 2 residues coordinate ADP: T268 and G311. ATP-binding residues include T268, G311, Q315, and G412. ADP contacts are provided by G412 and N416.

This sequence belongs to the FGGY kinase family. Homotetramer and homodimer (in equilibrium). In terms of processing, the phosphoenolpyruvate-dependent sugar phosphotransferase system (PTS), including enzyme I, and histidine-containing protein (HPr) are required for the phosphorylation, which leads to the activation of the enzyme.

The enzyme catalyses glycerol + ATP = sn-glycerol 3-phosphate + ADP + H(+). Its pathway is polyol metabolism; glycerol degradation via glycerol kinase pathway; sn-glycerol 3-phosphate from glycerol: step 1/1. Activated by phosphorylation and inhibited by fructose 1,6-bisphosphate (FBP). Its function is as follows. Key enzyme in the regulation of glycerol uptake and metabolism. Catalyzes the phosphorylation of glycerol to yield sn-glycerol 3-phosphate. This Streptococcus pneumoniae serotype 2 (strain D39 / NCTC 7466) protein is Glycerol kinase.